A 143-amino-acid polypeptide reads, in one-letter code: Putative protein FPV235 (143 aa).

The sequence is that of Putative protein FPV235 from Vertebrata (FPV).